Reading from the N-terminus, the 363-residue chain is Probable tRNA pseudouridine synthase D (363 aa).

Asp82 functions as the Nucleophile in the catalytic mechanism. The region spanning 151–363 (YLPAYIGYQR…IARTDPRLFT (213 aa)) is the TRUD domain.

This sequence belongs to the pseudouridine synthase TruD family.

The catalysed reaction is uridine(13) in tRNA = pseudouridine(13) in tRNA. Functionally, could be responsible for synthesis of pseudouridine from uracil-13 in transfer RNAs. This is Probable tRNA pseudouridine synthase D from Sulfurisphaera tokodaii (strain DSM 16993 / JCM 10545 / NBRC 100140 / 7) (Sulfolobus tokodaii).